The sequence spans 258 residues: MALSRTHRVVAGVAHTRVYKKIWKYWYPLMTRGLGADELVFINWAYEEDPPMDLPLEATDEPDRCHINLYHRTATQADLSGKRVLEVSCGHGGGASYLTRTLGPASYTALDLNPAGIKFCQQRHHLPGLDFVQGDAEDLPFEDESFDVVLNVEASHCYPRFPVFLEEVKRVLRPGGYFAYADIRPCTEIAEWEAALAAAGLQQISHREINAEVLRGIDINTPKSRERVKRHLPIFLRAAGRNYIGATGTPPIPPDAKR.

This sequence belongs to the methyltransferase superfamily. Phthiotriol/phenolphthiotriol dimycocerosates methyltransferase family.

Functionally, catalyzes the methylation of the lipid moiety of the intermediate compounds phthiotriol and glycosylated phenolphthiotriol dimycoserosates to form phthiocerol dimycocerosates (DIM A) and glycosylated phenolphthiocerol dimycocerosates (PGL). The chain is Probable phthiotriol/phenolphthiotriol dimycocerosates methyltransferase 2 from Mycobacterium ulcerans (strain Agy99).